The sequence spans 121 residues: Ribulose bisphosphate carboxylase small subunit (121 aa).

The protein belongs to the RuBisCO small chain family. Heterohexadecamer of 8 large and 8 small subunits.

Functionally, ruBisCO catalyzes two reactions: the carboxylation of D-ribulose 1,5-bisphosphate, the primary event in carbon dioxide fixation, as well as the oxidative fragmentation of the pentose substrate. Both reactions occur simultaneously and in competition at the same active site. Although the small subunit is not catalytic it is essential for maximal activity. In Alvinoconcha hessleri symbiotic bacterium, this protein is Ribulose bisphosphate carboxylase small subunit.